A 433-amino-acid chain; its full sequence is Putative ankyrin repeat protein R784 (433 aa).

ANK repeat units follow at residues 44–70 (NQNLVLECAIEVDNIYIINKLIDKTDV), 71–101 (NGLKFVMRWSALHGSFQIIKSIIRKDHNNDL), 102–131 (LDLHAINWSIESNHLHISKYLIDKYNIVII), 179–205 (FYDSMIELACLYGHVHVVQYFIDNQCS), 206–235 (VRQKWLYYSCLSGNFDLVKLLCKNGCRIFS), 237–264 (RRLINTAITGGNLDIVRYCLLHSKIDLA), 265–294 (QNNFAMKIAIKTGHIGIVRLLVSHGSDIHF), 296–321 (NGECMIIASRGGFANIVKFFLENKVY), 322–351 (MSEKVLKIAAIRGYLDIIKVFIKYASACMS), and 380–409 (NMRKILIWSLINNRINIVTYLLEIFPKLRE).

The chain is Putative ankyrin repeat protein R784 from Acanthamoeba polyphaga mimivirus (APMV).